A 127-amino-acid polypeptide reads, in one-letter code: Protein ApaG (127 aa).

An ApaG domain is found at 3–127 (ESEKYRIEVE…FMLAMPRVLH (125 aa)).

The sequence is that of Protein ApaG from Aromatoleum aromaticum (strain DSM 19018 / LMG 30748 / EbN1) (Azoarcus sp. (strain EbN1)).